The chain runs to 292 residues: Protoheme IX farnesyltransferase (292 aa).

9 consecutive transmembrane segments (helical) span residues 13 to 33 (ILFG…QGHV), 35 to 55 (FLLL…GCVV), 84 to 104 (TALI…WFWV), 106 to 126 (PYSF…YSLW), 135 to 155 (TIIG…AVTH), 161 to 181 (ALLI…AIAI), 206 to 226 (VECL…YCFG), 231 to 251 (FFLL…IIGF), and 263 to 283 (LFLF…FTYQ).

This sequence belongs to the UbiA prenyltransferase family. Protoheme IX farnesyltransferase subfamily.

Its subcellular location is the cell inner membrane. The enzyme catalyses heme b + (2E,6E)-farnesyl diphosphate + H2O = Fe(II)-heme o + diphosphate. It functions in the pathway porphyrin-containing compound metabolism; heme O biosynthesis; heme O from protoheme: step 1/1. Converts heme B (protoheme IX) to heme O by substitution of the vinyl group on carbon 2 of heme B porphyrin ring with a hydroxyethyl farnesyl side group. In Acinetobacter baylyi (strain ATCC 33305 / BD413 / ADP1), this protein is Protoheme IX farnesyltransferase.